A 354-amino-acid polypeptide reads, in one-letter code: NADH-quinone oxidoreductase subunit H (354 aa).

The next 8 helical transmembrane spans lie at 23–43, 91–111, 124–144, 162–182, 203–223, 250–270, 291–311, and 330–350; these read LVRA…LILW, YIIA…VVPF, LLYV…AGWA, ISYE…TGSL, ILSW…ISGV, GMAF…ISAM, IPGF…FIWL, and IFIP…VSPW.

The protein belongs to the complex I subunit 1 family. NDH-1 is composed of 14 different subunits. Subunits NuoA, H, J, K, L, M, N constitute the membrane sector of the complex.

It is found in the cell inner membrane. It carries out the reaction a quinone + NADH + 5 H(+)(in) = a quinol + NAD(+) + 4 H(+)(out). In terms of biological role, NDH-1 shuttles electrons from NADH, via FMN and iron-sulfur (Fe-S) centers, to quinones in the respiratory chain. The immediate electron acceptor for the enzyme in this species is believed to be ubiquinone. Couples the redox reaction to proton translocation (for every two electrons transferred, four hydrogen ions are translocated across the cytoplasmic membrane), and thus conserves the redox energy in a proton gradient. This subunit may bind ubiquinone. This chain is NADH-quinone oxidoreductase subunit H, found in Ralstonia nicotianae (strain ATCC BAA-1114 / GMI1000) (Ralstonia solanacearum).